We begin with the raw amino-acid sequence, 96 residues long: Protein Vpr (96 aa).

Residues 1–42 (MEQAPADQGPQREPYNEWALELLEELKSEAVRHFPRIWLHSL) are homooligomerization. A phosphoserine; by host mark is found at serine 79, serine 94, and serine 96.

Belongs to the HIV-1 VPR protein family. As to quaternary structure, homooligomer, may form homodimer. Interacts with p6-gag region of the Pr55 Gag precursor protein through a (Leu-X-X)4 motif near the C-terminus of the P6gag protein. Interacts with host UNG. May interact with host RAD23A/HHR23A. Interacts with host VPRBP/DCAF1, leading to hijack the CUL4A-RBX1-DDB1-DCAF1/VPRBP complex, mediating ubiquitination of host proteins such as TERT and ZGPAT and arrest of the cell cycle in G2 phase. Post-translationally, phosphorylated on several residues by host. These phosphorylations regulate VPR activity for the nuclear import of the HIV-1 pre-integration complex.

The protein localises to the virion. Its subcellular location is the host nucleus. The protein resides in the host extracellular space. During virus replication, may deplete host UNG protein, and incude G2-M cell cycle arrest. Acts by targeting specific host proteins for degradation by the 26S proteasome, through association with the cellular CUL4A-DDB1 E3 ligase complex by direct interaction with host VPRPB/DCAF-1. Cell cycle arrest reportedly occurs within hours of infection and is not blocked by antiviral agents, suggesting that it is initiated by the VPR carried into the virion. Additionally, VPR induces apoptosis in a cell cycle dependent manner suggesting that these two effects are mechanistically linked. Detected in the serum and cerebrospinal fluid of AIDS patient, VPR may also induce cell death to bystander cells. In terms of biological role, during virus entry, plays a role in the transport of the viral pre-integration (PIC) complex to the host nucleus. This function is crucial for viral infection of non-dividing macrophages. May act directly at the nuclear pore complex, by binding nucleoporins phenylalanine-glycine (FG)-repeat regions. In Human immunodeficiency virus type 1 group M subtype D (isolate ELI) (HIV-1), this protein is Protein Vpr.